Consider the following 593-residue polypeptide: MFENQQQLLRLHGCKLFIIGENDNLVNKYGHSVAIACCYDPQGMSVRVFREGSQQQLEEYPVSVKTTHLNHGITSHILIVGGEMIYVKFASEEDCQSFRMLLQNMSGKVNSVFNLRTEDSSASQYFQFYGYLSQQQNMMQDFVRTSTYQRAIYSNSQDFHNKIVLDVGAGSGILSFFAVQAGAAKVYAVEASNMAQYAQQLVLSNNLDGKIIVIAGKIEEIELPEMVDIIISEPMGYMLYNERMLETYLHGKKWLRPEGKMFPSRGDLHVAPFTDEALYMEQYNKANFWMQTEFHGVNLVALRDAAMKEYFRQPIVDTFDIRICMAKSIRHTTNFLTADEKDLHRIQIDVEFHILETGTCHGLAFWFDVEFAGSCSQVWLSTAPTESLTHWYQVRCLLQTPIFVKQGQVLSGKVVLAANQRQSYDVEMDLKLEGTMITSTNTLDLKNPYFRYTGAPVPAPPGSNTTSPSEAYWGQLDAQGARNAVNLVNGITVNGLGEVDMTMINTNLMPIGNQPNIHPGLISSTGRQQSQQQTTPAQPLTMNPTIACAATSTQNVAQQQLIGGAISPSLFTTPTQQIINSHHAQPIHGAQFY.

Positions 122–429 (ASQYFQFYGY…QRQSYDVEMD (308 aa)) constitute an SAM-dependent MTase PRMT-type domain. The S-adenosyl-L-methionine site is built by Q135, R144, G168, E190, E219, and T247. Asymmetric dimethylarginine; by autocatalysis is present on R482. The disordered stretch occupies residues 521–540 (LISSTGRQQSQQQTTPAQPL). Low complexity predominate over residues 523 to 535 (SSTGRQQSQQQTT).

It belongs to the class I-like SAM-binding methyltransferase superfamily. Protein arginine N-methyltransferase family. Homodimer. The dimethylated protein is the major form.

It is found in the cytoplasm. Its subcellular location is the nucleus. The catalysed reaction is L-arginyl-[protein] + 2 S-adenosyl-L-methionine = N(omega),N(omega)-dimethyl-L-arginyl-[protein] + 2 S-adenosyl-L-homocysteine + 2 H(+). Methylates (mono- and asymmetric dimethylation) the guanidino nitrogens of arginyl residues in proteins. May methylate histone H3 at 'Arg-17' and activate transcription via chromatin remodeling. This Aedes aegypti (Yellowfever mosquito) protein is Histone-arginine methyltransferase CARMER.